The chain runs to 37 residues: Potassium channel toxin alpha-KTx 1.4 (37 aa).

Cystine bridges form between Cys7–Cys28, Cys13–Cys33, and Cys17–Cys35.

The protein belongs to the short scorpion toxin superfamily. Potassium channel inhibitor family. Alpha-KTx 01 subfamily. In terms of tissue distribution, expressed by the venom gland.

The protein resides in the secreted. Functionally, blocks selectively the high conductance calcium-activated (maxi-K) potassium channels. The sequence is that of Potassium channel toxin alpha-KTx 1.4 from Centruroides limbatus (Bark scorpion).